The sequence spans 474 residues: Transcription factor SOX-4 (474 aa).

The span at Met1–Asn10 shows a compositional bias: polar residues. Residues Met1 to His58 are disordered. Positions Ala31 to Gly44 are enriched in low complexity. Residues Ile59–Lys127 constitute a DNA-binding region (HMG box). Lys95 bears the N6-acetyllysine mark. Disordered regions lie at residues Tyr128 to Lys228, Ala262 to Lys286, and Leu302 to Ser416. A compositionally biased stretch (low complexity) spans Asn138 to Ser149. A compositionally biased stretch (gly residues) spans Val158 to Ala189. Low complexity-rich tracts occupy residues Ser266–Ala283, Thr304–Asp320, Ala336–Ser354, and Ala366–Ser396. The segment covering Ser397–Leu406 has biased composition (acidic residues). The segment covering Asp407 to Ser416 has biased composition (low complexity). Residues Ser426–Phe434 carry the 9aaTAD motif.

In terms of assembly, interacts with UBE2I. Interacts with HDAC1; interaction inhibits the transcriptional activator activity. Post-translationally, acetylation at Lys-95 by KAT5 promotes the transcription activator activity and is required during myoblast differentiation. Acetylation by KAT5 abolishes the interaction between SOX4 and HDAC1 and switches SOX4 into a transcriptional activator. In terms of tissue distribution, testis, brain, and heart.

It localises to the nucleus. In terms of biological role, transcriptional activator that binds with high affinity to the T-cell enhancer motif 5'-AACAAAG-3' motif. Required for IL17A-producing Vgamma2-positive gamma-delta T-cell maturation and development, via binding to regulator loci of RORC to modulate expression. Involved in skeletal myoblast differentiation by promoting gene expression of CALD1. The sequence is that of Transcription factor SOX-4 from Homo sapiens (Human).